A 60-amino-acid chain; its full sequence is Large ribosomal subunit protein bL32 (60 aa).

Residues 1–23 form a disordered region; it reads MAVPRNRHSNARKNIRRSHHAKQ.

Belongs to the bacterial ribosomal protein bL32 family.

This chain is Large ribosomal subunit protein bL32, found in Chlamydia abortus (strain DSM 27085 / S26/3) (Chlamydophila abortus).